The chain runs to 176 residues: Cytidylate kinase (176 aa).

7 to 15 (GPPGSGTTS) is an ATP binding site.

It belongs to the cytidylate kinase family. Type 2 subfamily.

It is found in the cytoplasm. It carries out the reaction CMP + ATP = CDP + ADP. It catalyses the reaction dCMP + ATP = dCDP + ADP. This Methanosphaerula palustris (strain ATCC BAA-1556 / DSM 19958 / E1-9c) protein is Cytidylate kinase.